Here is a 191-residue protein sequence, read N- to C-terminus: Protein Ves (191 aa).

The protein belongs to the Ves family.

In Escherichia coli (strain 55989 / EAEC), this protein is Protein Ves.